We begin with the raw amino-acid sequence, 267 residues long: DNA repair protein RecO (267 aa).

Belongs to the RecO family.

Its function is as follows. Involved in DNA repair and RecF pathway recombination. The polypeptide is DNA repair protein RecO (Prochlorococcus marinus (strain MIT 9313)).